The primary structure comprises 170 residues: Putative invertase inhibitor (170 aa).

Positions 1-14 (MKLSFSLCIFFLIS) are cleaved as a signal peptide. Intrachain disulfides connect cysteine 22–cysteine 37 and cysteine 93–cysteine 133.

This sequence belongs to the PMEI family. As to expression, expressed in pollen (at protein level). Expressed in pollen.

This is Putative invertase inhibitor from Platanus orientalis (Oriental plane-tree).